We begin with the raw amino-acid sequence, 568 residues long: MPASISRSTYAAMFGPTTGDRLRLGDTDLIIEVERDLTTYGEEVKFGGGKVIRDGMGQSQRTRADGAMDTVITNALILDWSGIYKADVGLRDGRIAKIGKAGNPDTQPGVDIVIGPGTEIIAGEGRILTAGGMDAHIHFICPQQIEDSLHSGITTMLGGGTGPAHGTLATTCTPGPWHIGRMLQAADAFPINLAFAGKGNASLPAGLEEQVRAGASCLKLHEDWGTTPAAIDCCLTVADAMDVQVMIHTDTLNESGFVENTLAAIGGRTIHAFHTEGAGGGHAPDIIKVVGAANVIPSSTNPTMPYTANTVEEHLDMLMVCHHLDRSIPEDVAFAESRIRKETIAAEDILHDMGAFSVISSDSQAMGRVGEVITRTWQTAHKMKVQRGRLAEETGANDNMRVRRYIAKYTINPAIAHGLSHHIGSVEEGKRADLVLWTPAFFGAKPDMVLLGGMIVCAQMGDPNGSIPAQPFYSRPMFGAFGGALHASAVTFVSQAAQADGVGERLRLQKGTLAVEGTRGIGKADMKLNAHRPAIEVNPETYEVRADGEILTCQPLAELPLAQRYFLY.

A Urease domain is found at glycine 131–tyrosine 568. Ni(2+) is bound by residues histidine 136, histidine 138, and lysine 219. Lysine 219 bears the N6-carboxylysine mark. Histidine 221 contacts substrate. Ni(2+) contacts are provided by histidine 248 and histidine 274. Residue histidine 322 is the Proton donor of the active site. Aspartate 362 serves as a coordination point for Ni(2+).

It belongs to the metallo-dependent hydrolases superfamily. Urease alpha subunit family. In terms of assembly, heterotrimer of UreA (gamma), UreB (beta) and UreC (alpha) subunits. Three heterotrimers associate to form the active enzyme. The cofactor is Ni cation. Post-translationally, carboxylation allows a single lysine to coordinate two nickel ions.

It localises to the cytoplasm. It carries out the reaction urea + 2 H2O + H(+) = hydrogencarbonate + 2 NH4(+). The protein operates within nitrogen metabolism; urea degradation; CO(2) and NH(3) from urea (urease route): step 1/1. The protein is Urease subunit alpha of Cereibacter sphaeroides (strain ATCC 17025 / ATH 2.4.3) (Rhodobacter sphaeroides).